A 49-amino-acid polypeptide reads, in one-letter code: Large ribosomal subunit protein bL33 (49 aa).

This sequence belongs to the bacterial ribosomal protein bL33 family.

The protein is Large ribosomal subunit protein bL33 of Lactobacillus acidophilus (strain ATCC 700396 / NCK56 / N2 / NCFM).